Consider the following 422-residue polypeptide: MILPKRTQEKEISLLMHYLDEVFPLQFPFHERRYVGKREWLLTILASTRPVYYATLSLSLLHKEACLHEFEAELAEIWQKEKMRYYILALQESQQQLDALDTAYGIAKMKGNIHALASTLQLISFESSSLSKGDWQLHLRAGTSLIPVLIDGWAVALKSDKVASSSSLWTELDASDFNATHDEDSLSYEYVGALKFFANVLAMFGIFSCISIGPSSPFMEYRFLMDQAGLIQMDQIMGCRNWAMLAILEIGTLDKWKREEQENRRLSLKALTSRAMAIEGVLESGLREASGSALVDLITSIYATSALTYLHTVVSGLNPNLSEVQESVAATIVLLKRLPDLRAAKSLVWPLGVTGCMASRSQEDFFRGLIISAGATPRALRNCWGLMKVWEDTWKMREYMSKQPPERWEEVVSGQGPPMLLM.

The protein belongs to the TRI10 transcription regulator family.

The protein resides in the nucleus. Transcriptional activator of all of the trichothecene biosynthesis genes. Acts upstream of the cluster-encoded transcription factor TRI6 and is necessary for full expression of both the other trichothecene genes and the genes for the primary metabolic pathway that precedes the trichothecene biosynthetic pathway. The chain is Trichothecene biosynthesis transcription regulator TRI10 from Trichoderma arundinaceum.